The chain runs to 1316 residues: DNA-directed RNA polymerase subunit beta' (1316 aa).

Cys60, Cys62, Cys75, and Cys78 together coordinate Zn(2+). The tract at residues 183-209 (ELEEEGAKSDVRRKVRDGGEREMRQLR) is disordered. The Mg(2+) site is built by Asp535, Asp537, and Asp539. Zn(2+)-binding residues include Cys890, Cys966, Cys973, and Cys976.

This sequence belongs to the RNA polymerase beta' chain family. In terms of assembly, the RNAP catalytic core consists of 2 alpha, 1 beta, 1 beta' and 1 omega subunit. When a sigma factor is associated with the core the holoenzyme is formed, which can initiate transcription. Mg(2+) is required as a cofactor. Zn(2+) serves as cofactor.

It carries out the reaction RNA(n) + a ribonucleoside 5'-triphosphate = RNA(n+1) + diphosphate. Functionally, DNA-dependent RNA polymerase catalyzes the transcription of DNA into RNA using the four ribonucleoside triphosphates as substrates. The protein is DNA-directed RNA polymerase subunit beta' of Mycolicibacterium gilvum (strain PYR-GCK) (Mycobacterium gilvum (strain PYR-GCK)).